Reading from the N-terminus, the 621-residue chain is Kelch-like protein 6 (621 aa).

A BTB domain is found at 72-139 (TDVILCVDIQ…TYTSKALITK (68 aa)). A BACK domain is found at 174-276 (CVGILRLADT…DPWYFVETVE (103 aa)). Kelch repeat units follow at residues 320–367 (VFMI…NKKW), 378–421 (EVYI…VLGG), 422–468 (KVYV…SHKK), 470–516 (LYVI…SFRD), 517–558 (RIYV…PCNN), and 560–606 (LYIT…TIRK).

In terms of tissue distribution, found in germinal center B-cells.

In terms of biological role, involved in B-lymphocyte antigen receptor signaling and germinal center formation. This is Kelch-like protein 6 (KLHL6) from Homo sapiens (Human).